A 277-amino-acid polypeptide reads, in one-letter code: 3-methyl-2-oxobutanoate hydroxymethyltransferase (277 aa).

Aspartate 54 and aspartate 93 together coordinate Mg(2+). Residues 54 to 55 (DS), aspartate 93, and lysine 122 contribute to the 3-methyl-2-oxobutanoate site. Position 124 (glutamate 124) interacts with Mg(2+). The active-site Proton acceptor is the glutamate 191.

The protein belongs to the PanB family. As to quaternary structure, homodecamer; pentamer of dimers. It depends on Mg(2+) as a cofactor.

Its subcellular location is the cytoplasm. It carries out the reaction 3-methyl-2-oxobutanoate + (6R)-5,10-methylene-5,6,7,8-tetrahydrofolate + H2O = 2-dehydropantoate + (6S)-5,6,7,8-tetrahydrofolate. Its pathway is cofactor biosynthesis; (R)-pantothenate biosynthesis; (R)-pantoate from 3-methyl-2-oxobutanoate: step 1/2. Catalyzes the reversible reaction in which hydroxymethyl group from 5,10-methylenetetrahydrofolate is transferred onto alpha-ketoisovalerate to form ketopantoate. The polypeptide is 3-methyl-2-oxobutanoate hydroxymethyltransferase (Alkalilimnicola ehrlichii (strain ATCC BAA-1101 / DSM 17681 / MLHE-1)).